Reading from the N-terminus, the 595-residue chain is MAAVDDATGLEAARKQKIHNLKLKTACLENEELVQELHVSDWSETQRQKLRGAHLKAEELVAAVDVGTKWNLTEVYDLAKLMRVCGLEMSQRELYRPEDKAQFMDIIAMKKVLQDLRQNRNKTRVVSFTQMIDNAIAKVEKVEEDVRRSQLDATQLAQVPTQTLKQVEDIMNVTQIQNALASTDDQIKTQLAHVEKTNEIQNVAMHDGEMQVAEEQMWTKVQLQERLIDLIQDKFRLISKCEEENQAFSKIHEVQKQANQETSQMKDAKRRLKQRCETDLKHIHDAIQKADLEDAEATKRHAANKEKSDRYIRENEDRQEETWNKIQDLERQLQKLGTERFDEVKRRIEEIDREEKRRVEYSQFLEVASQHKKLLELTVYNCDLAIRCTGLVEELVSEGCAAVKARHDKTSQDLAALRLDVHKEHLEYFRMLYLTLGSLIYKKEKRMEEIDRNIRTTHIQLEFCVETFDPNAKKHADMKKELYRLRQGVEEELAMLKEKQAKALEEFKESEEVSGRCWHRVQPPCDENNEEVLTRRSKMVEYRSHLTKQEEVKIAAEREEIKRALTAQLWCRWRAGPHRKQHCTHASNSVAAIIM.

The tract at residues 294–317 (DAEATKRHAANKEKSDRYIRENED) is disordered. The tract at residues 317 to 337 (DRQEETWNKIQDLERQLQKLG) is calmodulin-binding.

Heterodimer of a 69 kDa and a 73 kDa protein.

The protein resides in the cell projection. The protein localises to the cilium. It localises to the flagellum. It is found in the cytoplasm. Its subcellular location is the cytoskeleton. In terms of biological role, major component of the paraflagellar rod (PFR). The PFR is a highly ordered lattices of fibrous proteins that are located inside the flagellum and assume a fixed orientation with respect to the microtubular axoneme. The polypeptide is 73 kDa paraflagellar rod protein (PFRC) (Trypanosoma brucei brucei).